We begin with the raw amino-acid sequence, 326 residues long: Tagatose 1,6-diphosphate aldolase (326 aa).

This sequence belongs to the aldolase LacD family.

It catalyses the reaction D-tagatofuranose 1,6-bisphosphate = D-glyceraldehyde 3-phosphate + dihydroxyacetone phosphate. It participates in carbohydrate metabolism; D-tagatose 6-phosphate degradation; D-glyceraldehyde 3-phosphate and glycerone phosphate from D-tagatose 6-phosphate: step 2/2. The chain is Tagatose 1,6-diphosphate aldolase from Staphylococcus aureus (strain bovine RF122 / ET3-1).